A 293-amino-acid chain; its full sequence is SAGA-associated factor 29 (293 aa).

The stretch at 12–88 forms a coiled coil; the sequence is ELLAELQRLL…KALDKIAEIK (77 aa). Positions 152 to 293 constitute an SGF29 C-terminal domain; that stretch reads GDYVAKPGDK…VVACKETKKK (142 aa). Histone H3K4me3 N-terminus binding stretches follow at residues 194 to 196 and 240 to 243; these read DID and QTTC. The interval 264–266 is histone H3K4me3 binding; the sequence is FED.

It belongs to the SGF29 family. Interacts with dimethylated and trimethylated 'Lys-4' of histone H3 (H3K4me2 and H3K4me3), with a preference for the trimethylated form (H3K4me3). Component of some SAGA-type complexes. Component of the ADA2A-containing complex (ATAC).

It localises to the nucleus. Functionally, chromatin reader component of some histone acetyltransferase (HAT) SAGA-type complexes like the TFTC-HAT, ATAC or STAGA complexes. SGF29 specifically recognizes and binds methylated 'Lys-4' of histone H3 (H3K4me), with a preference for trimethylated form (H3K4me3). In the SAGA-type complexes, SGF29 is required to recruit complexes to H3K4me. Also binds non-histone proteins that are methylated on Lys residues. This Gallus gallus (Chicken) protein is SAGA-associated factor 29.